A 581-amino-acid chain; its full sequence is Arginine--tRNA ligase (581 aa).

The short motif at 122–132 (PNVAKPMHVGH) is the 'HIGH' region element.

Belongs to the class-I aminoacyl-tRNA synthetase family. In terms of assembly, monomer.

The protein localises to the cytoplasm. The enzyme catalyses tRNA(Arg) + L-arginine + ATP = L-arginyl-tRNA(Arg) + AMP + diphosphate. The polypeptide is Arginine--tRNA ligase (Francisella tularensis subsp. tularensis (strain WY96-3418)).